The chain runs to 286 residues: Putative sugar uptake protein lin0215 (286 aa).

Transmembrane regions (helical) follow at residues 4 to 26, 33 to 55, 114 to 136, 149 to 167, 177 to 194, 207 to 226, 230 to 252, and 264 to 283; these read MIAL…FGGS, GMTL…VYTL, LRII…TSYA, GLIT…VVLI, AILP…IMTH, LLLI…MVHA, VGVA…GGIV, and LYVI…IGVA.

Belongs to the GRP transporter (TC 2.A.7.5) family.

It localises to the cell membrane. This is Putative sugar uptake protein lin0215 from Listeria innocua serovar 6a (strain ATCC BAA-680 / CLIP 11262).